A 213-amino-acid polypeptide reads, in one-letter code: Pyrrolidone-carboxylate peptidase (213 aa).

Residues glutamate 81, cysteine 144, and histidine 166 contribute to the active site.

It belongs to the peptidase C15 family. As to quaternary structure, homodimer.

The protein localises to the cytoplasm. It carries out the reaction Release of an N-terminal pyroglutamyl group from a polypeptide, the second amino acid generally not being Pro.. Its function is as follows. Removes 5-oxoproline from various penultimate amino acid residues except L-proline. The sequence is that of Pyrrolidone-carboxylate peptidase (pcp) from Pseudomonas fluorescens.